The chain runs to 181 residues: Translationally-controlled tumor protein homolog (181 aa).

Positions 1–181 (MLIYKDIFTD…VKEAILEEKC (181 aa)) constitute a TCTP domain.

The protein belongs to the TCTP family.

It is found in the cytoplasm. Functionally, involved in calcium binding and microtubule stabilization. The protein is Translationally-controlled tumor protein homolog (tct-1) of Caenorhabditis briggsae.